We begin with the raw amino-acid sequence, 225 residues long: MGQKVNPIGLRIGITRGWDSIWFSQSDYKKNLHEDIKIRKFIQSRFSNAGVVKVVIERFPEKINVNLHTAKPGIVIGQKGSNIEAVKKILKTMTEKPVNLNIIEVKKPETVAQCIAESIALQIEQRQPFRRVMKQELRRAMRGGVEGIKILISGRLNGADMARRENYKEGRIPLHTLRAKIDLGFKEAKTTFGQIGVKVWTYSGDFIQSKEESEEDKYAVKRRTS.

Positions 38-106 (IRKFIQSRFS…PVNLNIIEVK (69 aa)) constitute a KH type-2 domain.

Belongs to the universal ribosomal protein uS3 family. In terms of assembly, part of the 30S ribosomal subunit. Forms a tight complex with proteins S10 and S14.

In terms of biological role, binds the lower part of the 30S subunit head. Binds mRNA in the 70S ribosome, positioning it for translation. This is Small ribosomal subunit protein uS3 from Leptospira borgpetersenii serovar Hardjo-bovis (strain JB197).